A 260-amino-acid polypeptide reads, in one-letter code: Adenosylcobinamide-GDP ribazoletransferase (260 aa).

7 helical membrane passes run F31 to F51, I57 to L77, Y108 to I128, A131 to F151, F173 to F193, L206 to S226, and L240 to L260.

The protein belongs to the CobS family. Requires Mg(2+) as cofactor.

It localises to the cell inner membrane. It catalyses the reaction alpha-ribazole + adenosylcob(III)inamide-GDP = adenosylcob(III)alamin + GMP + H(+). The catalysed reaction is alpha-ribazole 5'-phosphate + adenosylcob(III)inamide-GDP = adenosylcob(III)alamin 5'-phosphate + GMP + H(+). Its pathway is cofactor biosynthesis; adenosylcobalamin biosynthesis; adenosylcobalamin from cob(II)yrinate a,c-diamide: step 7/7. In terms of biological role, joins adenosylcobinamide-GDP and alpha-ribazole to generate adenosylcobalamin (Ado-cobalamin). Also synthesizes adenosylcobalamin 5'-phosphate from adenosylcobinamide-GDP and alpha-ribazole 5'-phosphate. The sequence is that of Adenosylcobinamide-GDP ribazoletransferase from Treponema denticola (strain ATCC 35405 / DSM 14222 / CIP 103919 / JCM 8153 / KCTC 15104).